The chain runs to 243 residues: Probable transcriptional regulatory protein LGAS_1276 (243 aa).

Residues 1–22 (MSGHSKWHNIQGRKNAQDAKRG) form a disordered region.

Belongs to the TACO1 family.

The protein localises to the cytoplasm. The chain is Probable transcriptional regulatory protein LGAS_1276 from Lactobacillus gasseri (strain ATCC 33323 / DSM 20243 / BCRC 14619 / CIP 102991 / JCM 1131 / KCTC 3163 / NCIMB 11718 / NCTC 13722 / AM63).